The following is a 433-amino-acid chain: Inorganic triphosphatase (433 aa).

In terms of domain architecture, CYTH spans 2–202 (AQEIELKFIV…ARGYHLAQGN (201 aa)). A CHAD domain is found at 218-433 (KADVEQGLEA…EPFWLHSGKR (216 aa)).

It catalyses the reaction triphosphate + H2O = phosphate + diphosphate. With respect to regulation, inhibited by calcium ion and activated by magnesium ion. Involved in the hydrolysis of the beta-gamma-phosphoanhydride linkage of triphosphate-containing substrates (inorganic or nucleoside-linked). Catalyzes the hydrolysis of inorganic triphosphate (PPPi), which could be cytotoxic because of its high affinity for calcium ion, thereby interfering with calcium signaling. It also hydrolyzes slowly thiamine triphosphate (ThTP). YgiF is a specific PPPase, but it contributes only marginally to the total PPPase activity in E.coli, where the main enzyme responsible for hydrolysis of PPPi is inorganic pyrophosphatase (PPase). In Escherichia coli (strain K12), this protein is Inorganic triphosphatase (ygiF).